Here is a 644-residue protein sequence, read N- to C-terminus: Protein cueball (644 aa).

An N-terminal signal peptide occupies residues 1 to 26 (MIRIRFGMDVLLVLLLATCLLSPAHG). The Extracellular portion of the chain corresponds to 27–531 (TPLEWDFAVT…VCLTPKVWTS (505 aa)). N-linked (GlcNAc...) asparagine glycosylation is found at Asn-82 and Asn-108. LDL-receptor class B repeat units follow at residues 121-166 (MNLF…DVCR), 167-211 (RKLY…DQLS), and 212-257 (DRLF…TNDA). 3 N-linked (GlcNAc...) asparagine glycosylation sites follow: Asn-175, Asn-190, and Asn-196. N-linked (GlcNAc...) asparagine glycosylation is present at Asn-313. EGF-like domains follow at residues 398-430 (EIRECHNYCVHGTCQMSESAYPKCYCQPGFTGE) and 433-471 (EVSVCAGLCLNGGHCRASKDEKEAPSCECPAKFGGARCE). Cystine bridges form between Cys-402/Cys-411, Cys-406/Cys-421, Cys-437/Cys-447, Cys-441/Cys-459, and Cys-461/Cys-470. N-linked (GlcNAc...) asparagine glycans are attached at residues Asn-473 and Asn-508. Residues 532–552 (SVIIILVIGIVSSLLLVAVIV) form a helical membrane-spanning segment. The Cytoplasmic segment spans residues 553–644 (HGIRRLYKPK…LIHNMEDDLY (92 aa)).

Belongs to the cueball family.

It is found in the cell membrane. Has a role in spermatogenesis and oogenesis. This chain is Protein cueball, found in Drosophila erecta (Fruit fly).